Here is a 70-residue protein sequence, read N- to C-terminus: MSKEKKFEENLADLEVIVQKLENGDVALEEAIAEFQKGMKLSKELQASLDKAEKTLVKVMQADGTETEME.

This sequence belongs to the XseB family. Heterooligomer composed of large and small subunits.

It localises to the cytoplasm. The catalysed reaction is Exonucleolytic cleavage in either 5'- to 3'- or 3'- to 5'-direction to yield nucleoside 5'-phosphates.. Bidirectionally degrades single-stranded DNA into large acid-insoluble oligonucleotides, which are then degraded further into small acid-soluble oligonucleotides. In Streptococcus sanguinis (strain SK36), this protein is Exodeoxyribonuclease 7 small subunit.